The chain runs to 321 residues: Malate dehydrogenase (321 aa).

NAD(+)-binding positions include 10-15 and D34; that span reads GSGMIG. Residues R83 and R89 each contribute to the substrate site. Residues N96 and 119-121 contribute to the NAD(+) site; that span reads ITN. Residues N121 and R152 each coordinate substrate. The Proton acceptor role is filled by H176.

It belongs to the LDH/MDH superfamily. MDH type 3 family.

It catalyses the reaction (S)-malate + NAD(+) = oxaloacetate + NADH + H(+). In terms of biological role, catalyzes the reversible oxidation of malate to oxaloacetate. The chain is Malate dehydrogenase from Chelativorans sp. (strain BNC1).